Reading from the N-terminus, the 120-residue chain is Ribonuclease P protein component 2 (120 aa).

It belongs to the eukaryotic/archaeal RNase P protein component 2 family. In terms of assembly, consists of a catalytic RNA component and at least 4-5 protein subunits.

It localises to the cytoplasm. It carries out the reaction Endonucleolytic cleavage of RNA, removing 5'-extranucleotides from tRNA precursor.. Functionally, part of ribonuclease P, a protein complex that generates mature tRNA molecules by cleaving their 5'-ends. This is Ribonuclease P protein component 2 from Thermococcus gammatolerans (strain DSM 15229 / JCM 11827 / EJ3).